The primary structure comprises 307 residues: UDP-3-O-acyl-N-acetylglucosamine deacetylase (307 aa).

Residues His-78, His-241, and Asp-245 each contribute to the Zn(2+) site. His-268 serves as the catalytic Proton donor.

The protein belongs to the LpxC family. Zn(2+) is required as a cofactor.

It catalyses the reaction a UDP-3-O-[(3R)-3-hydroxyacyl]-N-acetyl-alpha-D-glucosamine + H2O = a UDP-3-O-[(3R)-3-hydroxyacyl]-alpha-D-glucosamine + acetate. Its pathway is glycolipid biosynthesis; lipid IV(A) biosynthesis; lipid IV(A) from (3R)-3-hydroxytetradecanoyl-[acyl-carrier-protein] and UDP-N-acetyl-alpha-D-glucosamine: step 2/6. Its function is as follows. Catalyzes the hydrolysis of UDP-3-O-myristoyl-N-acetylglucosamine to form UDP-3-O-myristoylglucosamine and acetate, the committed step in lipid A biosynthesis. The chain is UDP-3-O-acyl-N-acetylglucosamine deacetylase from Paracidovorax citrulli (strain AAC00-1) (Acidovorax citrulli).